The sequence spans 63 residues: MESRLLDILVCPLCKGRLEFLRAQDELVCHADRLAFPVRDGIPVMLESAARPLDAPADTAHAS.

Belongs to the UPF0434 family.

This Bordetella avium (strain 197N) protein is UPF0434 protein BAV2101.